Here is a 443-residue protein sequence, read N- to C-terminus: Protein translocase subunit SecY (443 aa).

The next 10 helical transmembrane spans lie at 24 to 44 (LFVI…IPGI), 77 to 97 (IFAL…LLTV), 125 to 145 (LVLA…MPGM), 154 to 174 (FAFY…LMWL), 183 to 203 (IGNG…PPAI), 217 to 237 (FLVL…VVFV), 274 to 294 (VIPA…ASWF), 317 to 337 (YVLL…ALVF), 370 to 390 (MTRL…IPEF), and 397 to 417 (VPFY…MDFM).

The protein belongs to the SecY/SEC61-alpha family. As to quaternary structure, component of the Sec protein translocase complex. Heterotrimer consisting of SecY, SecE and SecG subunits. The heterotrimers can form oligomers, although 1 heterotrimer is thought to be able to translocate proteins. Interacts with the ribosome. Interacts with SecDF, and other proteins may be involved. Interacts with SecA.

It localises to the cell inner membrane. The central subunit of the protein translocation channel SecYEG. Consists of two halves formed by TMs 1-5 and 6-10. These two domains form a lateral gate at the front which open onto the bilayer between TMs 2 and 7, and are clamped together by SecE at the back. The channel is closed by both a pore ring composed of hydrophobic SecY resides and a short helix (helix 2A) on the extracellular side of the membrane which forms a plug. The plug probably moves laterally to allow the channel to open. The ring and the pore may move independently. The protein is Protein translocase subunit SecY of Escherichia coli O157:H7.